Consider the following 117-residue polypeptide: Large ribosomal subunit protein bL20 (117 aa).

This sequence belongs to the bacterial ribosomal protein bL20 family.

Functionally, binds directly to 23S ribosomal RNA and is necessary for the in vitro assembly process of the 50S ribosomal subunit. It is not involved in the protein synthesizing functions of that subunit. This chain is Large ribosomal subunit protein bL20, found in Maridesulfovibrio salexigens (strain ATCC 14822 / DSM 2638 / NCIMB 8403 / VKM B-1763) (Desulfovibrio salexigens).